The primary structure comprises 169 residues: MSRIALYPGSFDPVTNGHLDVVRHAVALCDKLVVAIGIHPGKKPLFTTEERLAMVERVFGPVAKAAGCDFGCTTYDNLTVTAAEKVGATIMIRGLRDGTDLDYEMQIAGMNETMAPAIHTVFLPASVGVRPITATLVRQIAAMGGDVSAFVPAEVASALKSKFAAGSPA.

Serine 10 is a binding site for substrate. ATP contacts are provided by residues 10 to 11 (SF) and histidine 18. Positions 42, 79, and 93 each coordinate substrate. ATP contacts are provided by residues 94–96 (GLR), glutamate 104, and 129–135 (VRPITAT).

Belongs to the bacterial CoaD family. As to quaternary structure, homohexamer. The cofactor is Mg(2+).

It localises to the cytoplasm. The catalysed reaction is (R)-4'-phosphopantetheine + ATP + H(+) = 3'-dephospho-CoA + diphosphate. Its pathway is cofactor biosynthesis; coenzyme A biosynthesis; CoA from (R)-pantothenate: step 4/5. In terms of biological role, reversibly transfers an adenylyl group from ATP to 4'-phosphopantetheine, yielding dephospho-CoA (dPCoA) and pyrophosphate. The chain is Phosphopantetheine adenylyltransferase from Rhodopseudomonas palustris (strain TIE-1).